The primary structure comprises 561 residues: MVKIKVRSSAWYDGVDNASHRSYLRAVGFTEEDFAKPLVGVLAAWSELGPCNYHTLDLARYVKEGVKEAGGVGLTAPTIVVNDGINMGTPGMRYSLISRDLIADTIEAQFNAHGVDAWVGIGGCDKTQPGIMMAMVRLDLPAVYLYGGTAEAGWLGERELTIEDTFEAVGSYLAGKITLEELKRIEELSFPTYGTCQGLFTANTMAMLSEALGLALLGSASPPATSARRRAYAVASGRAVLKAAELGVTPRRVVTYDAIYNAAVTLFATAGSTNAILHLLAIAHEAGVKFTLDDFDEISRRVPVIAALRPAGPYAMQDLDRIGGVPRILKKLYKAGFLRPEALTVEGETIGKLLERWQPPAVPEDGILYSVEKPYKPYSGIRILRGNLAPDGAVMKIGAADKLKFEGTAKVYNGEAEAFKAVAAGEIKPGDVVVIRYEGPKGAPGMPEMLKVTAAIVGAGLGEAVALVTDGRFSGATRGIMVGHVAPEAAVGGPIALVENGDKIAIDGETGRITLQIPQEELERRRKNWTPPPPKYSGGLLAKYAALVQQADKGAVTTPPR.

[2Fe-2S] cluster is bound at residue Cys-51. Asp-83 serves as a coordination point for Mg(2+). Cys-124 contacts [2Fe-2S] cluster. Mg(2+)-binding residues include Asp-125 and Lys-126. Lys-126 is subject to N6-carboxylysine. Cys-196 serves as a coordination point for [2Fe-2S] cluster. Mg(2+) is bound at residue Glu-448. Ser-474 (proton acceptor) is an active-site residue.

The protein belongs to the IlvD/Edd family. As to quaternary structure, homodimer. [2Fe-2S] cluster serves as cofactor. Mg(2+) is required as a cofactor.

It catalyses the reaction (2R)-2,3-dihydroxy-3-methylbutanoate = 3-methyl-2-oxobutanoate + H2O. The enzyme catalyses (2R,3R)-2,3-dihydroxy-3-methylpentanoate = (S)-3-methyl-2-oxopentanoate + H2O. Its pathway is amino-acid biosynthesis; L-isoleucine biosynthesis; L-isoleucine from 2-oxobutanoate: step 3/4. It participates in amino-acid biosynthesis; L-valine biosynthesis; L-valine from pyruvate: step 3/4. Functions in the biosynthesis of branched-chain amino acids. Catalyzes the dehydration of (2R,3R)-2,3-dihydroxy-3-methylpentanoate (2,3-dihydroxy-3-methylvalerate) into 2-oxo-3-methylpentanoate (2-oxo-3-methylvalerate) and of (2R)-2,3-dihydroxy-3-methylbutanoate (2,3-dihydroxyisovalerate) into 2-oxo-3-methylbutanoate (2-oxoisovalerate), the penultimate precursor to L-isoleucine and L-valine, respectively. This Pyrobaculum neutrophilum (strain DSM 2338 / JCM 9278 / NBRC 100436 / V24Sta) (Thermoproteus neutrophilus) protein is Dihydroxy-acid dehydratase.